A 497-amino-acid chain; its full sequence is Lysine--tRNA ligase (497 aa).

Positions 409 and 416 each coordinate Mg(2+).

Belongs to the class-II aminoacyl-tRNA synthetase family. In terms of assembly, homodimer. Requires Mg(2+) as cofactor.

The protein localises to the cytoplasm. The catalysed reaction is tRNA(Lys) + L-lysine + ATP = L-lysyl-tRNA(Lys) + AMP + diphosphate. In Streptococcus pyogenes serotype M3 (strain ATCC BAA-595 / MGAS315), this protein is Lysine--tRNA ligase.